Here is a 140-residue protein sequence, read N- to C-terminus: Large ribosomal subunit protein uL16 (140 aa).

It belongs to the universal ribosomal protein uL16 family. As to quaternary structure, part of the 50S ribosomal subunit.

Its function is as follows. Binds 23S rRNA and is also seen to make contacts with the A and possibly P site tRNAs. This Trichlorobacter lovleyi (strain ATCC BAA-1151 / DSM 17278 / SZ) (Geobacter lovleyi) protein is Large ribosomal subunit protein uL16.